A 277-amino-acid chain; its full sequence is F420-dependent methylenetetrahydromethanopterin dehydrogenase (277 aa).

The disordered stretch occupies residues 249 to 277; it reads EKATDSVSRKPHGADGKRLNKTKLMEKPE.

The protein belongs to the MTD family.

It carries out the reaction 5,10-methylenetetrahydromethanopterin + oxidized coenzyme F420-(gamma-L-Glu)(n) + 2 H(+) = 5,10-methenyl-5,6,7,8-tetrahydromethanopterin + reduced coenzyme F420-(gamma-L-Glu)(n). It participates in one-carbon metabolism; methanogenesis from CO(2); 5,10-methylene-5,6,7,8-tetrahydromethanopterin from 5,10-methenyl-5,6,7,8-tetrahydromethanopterin (coenzyme F420 route): step 1/1. Catalyzes the reversible reduction of methenyl-H(4)MPT(+) to methylene-H(4)MPT. This is F420-dependent methylenetetrahydromethanopterin dehydrogenase from Methanococcus aeolicus (strain ATCC BAA-1280 / DSM 17508 / OCM 812 / Nankai-3).